The sequence spans 141 residues: Acetyltransferase YpeA (141 aa).

In terms of domain architecture, N-acetyltransferase spans 1–141 (MEIRVFRQED…GKRLIEDEEY (141 aa)).

It belongs to the acetyltransferase family. YpeA subfamily.

The protein is Acetyltransferase YpeA of Escherichia coli O157:H7.